Consider the following 451-residue polypeptide: Phosphoglucosamine mutase (451 aa).

Ser107 functions as the Phosphoserine intermediate in the catalytic mechanism. The Mg(2+) site is built by Ser107, Asp246, Asp248, and Asp250. At Ser107 the chain carries Phosphoserine.

This sequence belongs to the phosphohexose mutase family. Mg(2+) serves as cofactor. Post-translationally, activated by phosphorylation.

The catalysed reaction is alpha-D-glucosamine 1-phosphate = D-glucosamine 6-phosphate. In terms of biological role, catalyzes the conversion of glucosamine-6-phosphate to glucosamine-1-phosphate. This Burkholderia ambifaria (strain MC40-6) protein is Phosphoglucosamine mutase.